A 192-amino-acid chain; its full sequence is Inosine triphosphate pyrophosphatase (192 aa).

An ITP-binding site is contributed by 11-16; it reads TGNKNK. Glutamate 41 provides a ligand contact to Mg(2+). ITP is bound by residues lysine 53, 69–70, lysine 86, 146–149, lysine 169, and 174–175; these read DT, FGWD, and HR.

It belongs to the HAM1 NTPase family. Homodimer. Mg(2+) is required as a cofactor. It depends on Mn(2+) as a cofactor.

It localises to the cytoplasm. The enzyme catalyses ITP + H2O = IMP + diphosphate + H(+). The catalysed reaction is dITP + H2O = dIMP + diphosphate + H(+). It carries out the reaction XTP + H2O = XMP + diphosphate + H(+). In terms of biological role, pyrophosphatase that hydrolyzes non-canonical purine nucleotides such as inosine triphosphate (ITP), deoxyinosine triphosphate (dITP) or xanthosine 5'-triphosphate (XTP) to their respective monophosphate derivatives. The enzyme does not distinguish between the deoxy- and ribose forms. Probably excludes non-canonical purines from RNA and DNA precursor pools, thus preventing their incorporation into RNA and DNA and avoiding chromosomal lesions. The chain is Inosine triphosphate pyrophosphatase from Ciona intestinalis (Transparent sea squirt).